We begin with the raw amino-acid sequence, 160 residues long: NADH-quinone oxidoreductase subunit B (160 aa).

Positions 37, 38, 102, and 132 each coordinate [4Fe-4S] cluster.

This sequence belongs to the complex I 20 kDa subunit family. In terms of assembly, NDH-1 is composed of 14 different subunits. Subunits NuoB, C, D, E, F, and G constitute the peripheral sector of the complex. Requires [4Fe-4S] cluster as cofactor.

The protein resides in the cell membrane. The catalysed reaction is a quinone + NADH + 5 H(+)(in) = a quinol + NAD(+) + 4 H(+)(out). Functionally, NDH-1 shuttles electrons from NADH, via FMN and iron-sulfur (Fe-S) centers, to quinones in the respiratory chain. Couples the redox reaction to proton translocation (for every two electrons transferred, four hydrogen ions are translocated across the cytoplasmic membrane), and thus conserves the redox energy in a proton gradient. This Polynucleobacter asymbioticus (strain DSM 18221 / CIP 109841 / QLW-P1DMWA-1) (Polynucleobacter necessarius subsp. asymbioticus) protein is NADH-quinone oxidoreductase subunit B.